The chain runs to 180 residues: Translation initiation factor IF-3 (180 aa).

It belongs to the IF-3 family. In terms of assembly, monomer.

The protein localises to the cytoplasm. IF-3 binds to the 30S ribosomal subunit and shifts the equilibrium between 70S ribosomes and their 50S and 30S subunits in favor of the free subunits, thus enhancing the availability of 30S subunits on which protein synthesis initiation begins. This chain is Translation initiation factor IF-3, found in Xylella fastidiosa (strain Temecula1 / ATCC 700964).